The primary structure comprises 369 residues: Dual-specificity RNA methyltransferase RlmN (369 aa).

Glu-96 functions as the Proton acceptor in the catalytic mechanism. One can recognise a Radical SAM core domain in the interval 102 to 338 (DGERGTLCVS…VTTIRTTRGD (237 aa)). Cys-109 and Cys-344 are joined by a disulfide. [4Fe-4S] cluster-binding residues include Cys-116, Cys-120, and Cys-123. Residues 169 to 170 (GE), Ser-201, 223 to 225 (SLH), and Asn-301 each bind S-adenosyl-L-methionine. Residue Cys-344 is the S-methylcysteine intermediate of the active site.

Belongs to the radical SAM superfamily. RlmN family. It depends on [4Fe-4S] cluster as a cofactor.

The protein localises to the cytoplasm. It catalyses the reaction adenosine(2503) in 23S rRNA + 2 reduced [2Fe-2S]-[ferredoxin] + 2 S-adenosyl-L-methionine = 2-methyladenosine(2503) in 23S rRNA + 5'-deoxyadenosine + L-methionine + 2 oxidized [2Fe-2S]-[ferredoxin] + S-adenosyl-L-homocysteine. It carries out the reaction adenosine(37) in tRNA + 2 reduced [2Fe-2S]-[ferredoxin] + 2 S-adenosyl-L-methionine = 2-methyladenosine(37) in tRNA + 5'-deoxyadenosine + L-methionine + 2 oxidized [2Fe-2S]-[ferredoxin] + S-adenosyl-L-homocysteine. Specifically methylates position 2 of adenine 2503 in 23S rRNA and position 2 of adenine 37 in tRNAs. m2A2503 modification seems to play a crucial role in the proofreading step occurring at the peptidyl transferase center and thus would serve to optimize ribosomal fidelity. This chain is Dual-specificity RNA methyltransferase RlmN, found in Marinobacter nauticus (strain ATCC 700491 / DSM 11845 / VT8) (Marinobacter aquaeolei).